Here is a 170-residue protein sequence, read N- to C-terminus: Vimentin A1 (170 aa).

Positions 1–10 are enriched in polar residues; it reads DLTEAANKSN. The interval 1–20 is disordered; that stretch reads DLTEAANKSNEALRLAKQES. Residues 1–111 are coil 2; it reads DLTEAANKSN…ATYRKLLEGE (111 aa). The IF rod domain occupies 1 to 115; that stretch reads DLTEAANKSN…KLLEGEESRI (115 aa). Residues 112-170 form a tail region; the sequence is ESRISTPLPNFSSFNLRETMLELKPNIESTFTKKVLIKTIETRDGQVLNESTQNHDDLE.

The protein belongs to the intermediate filament family. As to quaternary structure, homomer. In terms of processing, one of the most prominent phosphoproteins in various cells of mesenchymal origin. Phosphorylation is enhanced during cell division, at which time vimentin filaments are significantly reorganized. As to expression, expressed in low amounts in retina, optic nerve, and brain and in higher amounts in spinal cord.

Vimentins are class-III intermediate filaments found in various non-epithelial cells, especially mesenchymal cells. Vimentin is attached to the nucleus, endoplasmic reticulum, and mitochondria, either laterally or terminally. The sequence is that of Vimentin A1 from Carassius auratus (Goldfish).